Reading from the N-terminus, the 199-residue chain is Recombination protein RecR (199 aa).

The C4-type zinc-finger motif lies at 57-72 (CEKCNNFTEEVVCELC). The 96-residue stretch at 80 to 175 (ALLCVVEMPA…KITRIARGLP (96 aa)) folds into the Toprim domain.

The protein belongs to the RecR family.

May play a role in DNA repair. It seems to be involved in an RecBC-independent recombinational process of DNA repair. It may act with RecF and RecO. The polypeptide is Recombination protein RecR (Nitrosospira multiformis (strain ATCC 25196 / NCIMB 11849 / C 71)).